We begin with the raw amino-acid sequence, 302 residues long: Oxygen-dependent coproporphyrinogen-III oxidase (302 aa).

Position 94 (Ser-94) interacts with substrate. Positions 98 and 108 each coordinate a divalent metal cation. His-108 serves as the catalytic Proton donor. Position 110 to 112 (110 to 112 (NVR)) interacts with substrate. Residues His-147 and His-177 each coordinate a divalent metal cation. Positions 242-277 (YVEFNLVFDRGTLFGLQSGGRTESILMSMPPVANWR) are important for dimerization. Position 260 to 262 (260 to 262 (GGR)) interacts with substrate.

The protein belongs to the aerobic coproporphyrinogen-III oxidase family. In terms of assembly, homodimer. Requires a divalent metal cation as cofactor.

It localises to the cytoplasm. The catalysed reaction is coproporphyrinogen III + O2 + 2 H(+) = protoporphyrinogen IX + 2 CO2 + 2 H2O. Its pathway is porphyrin-containing compound metabolism; protoporphyrin-IX biosynthesis; protoporphyrinogen-IX from coproporphyrinogen-III (O2 route): step 1/1. Involved in the heme biosynthesis. Catalyzes the aerobic oxidative decarboxylation of propionate groups of rings A and B of coproporphyrinogen-III to yield the vinyl groups in protoporphyrinogen-IX. The protein is Oxygen-dependent coproporphyrinogen-III oxidase of Ralstonia nicotianae (strain ATCC BAA-1114 / GMI1000) (Ralstonia solanacearum).